A 157-amino-acid polypeptide reads, in one-letter code: Cyclic pyranopterin monophosphate synthase (157 aa).

Substrate-binding positions include 74 to 76 and 112 to 113; these read MCH and ME. Aspartate 127 is an active-site residue.

The protein belongs to the MoaC family. In terms of assembly, homohexamer; trimer of dimers.

It carries out the reaction (8S)-3',8-cyclo-7,8-dihydroguanosine 5'-triphosphate = cyclic pyranopterin phosphate + diphosphate. Its pathway is cofactor biosynthesis; molybdopterin biosynthesis. Catalyzes the conversion of (8S)-3',8-cyclo-7,8-dihydroguanosine 5'-triphosphate to cyclic pyranopterin monophosphate (cPMP). This is Cyclic pyranopterin monophosphate synthase from Campylobacter jejuni subsp. jejuni serotype O:23/36 (strain 81-176).